The chain runs to 745 residues: Cytoplasmic polyadenylation element-binding protein 3 (745 aa).

3 disordered regions span residues 1–45, 94–180, and 204–283; these read MNLN…KSPT, VGSK…TNNS, and NKAN…FGEL. Basic and acidic residues predominate over residues 162–175; sequence LNFERDAEQKKDST. Positions 219–229 are enriched in polar residues; the sequence is ETPTDSPQKGF. A compositionally biased stretch (low complexity) spans 230 to 240; the sequence is SSSTESSPSDS. Over residues 241–255 the composition is skewed to polar residues; sequence MNQFPSREHFTSANE. The segment covering 264 to 276 has biased composition (basic and acidic residues); sequence FQQEHGNKNRDSD. An RRM domain is found at 297 to 319; it reads IFVGGVPWDITEAALKDSFGEFG.

In terms of biological role, cytoplasmic polyadenylation element binding protein that binds to and regulates the translation of specific mRNAs. May not be required for oogenesis. This chain is Cytoplasmic polyadenylation element-binding protein 3 (cpb-3), found in Caenorhabditis elegans.